Here is a 182-residue protein sequence, read N- to C-terminus: Interferon gamma 1 (182 aa).

The N-terminal stretch at 1–21 (MIAQNMTIFFWGVCLLTSGWA) is a signal peptide. An N-linked (GlcNAc...) asparagine glycan is attached at N93.

The protein belongs to the type II (or gamma) interferon family. As to quaternary structure, homodimer. In terms of tissue distribution, highly expressed in spleen. Also detected at lower levels in brain, gill, kidney, heart, intestine and muscle. In immune cell populations, has highest expression in peripheral blood leukocytes and splenocytes. Detected in kidney-derived monocytes, neutrophils, macrophages and leukocytes.

The protein resides in the secreted. In terms of biological role, cytokine which binds to interferon gamma receptor 1-like (ifngr1l). Has activating effects on primary macrophages and neutrophils. Induces nitric oxide production and phagocytic responses in macrophages. Primes macrophages and neutrophils for production of reactive oxygen intermediates (ROI). Stimulates phosphorylation and nuclear localization of the JAK/STAT signal transducer stat1. Promotes increased expression of a number of genes important for macrophage activity, including the interferon regulatory factors irf1, irf2, irf8 and irf9. The sequence is that of Interferon gamma 1 from Carassius auratus (Goldfish).